We begin with the raw amino-acid sequence, 188 residues long: E3 ubiquitin-protein ligase RNF183 (188 aa).

The Cytoplasmic portion of the chain corresponds to 1–157 (MAEQQGREPE…RECFRNPHFR (157 aa)). An RING-type zinc finger spans residues 11-58 (CPVCWNPFNNTFHTPKVLDCCHSFCVECLAHISLVTPTRRRLLCPLCR). A helical; Anchor for type IV membrane protein transmembrane segment spans residues 158 to 178 (IFAYMMAVILCGTVLFIFSIF). At 179 to 188 (CTRRFFWGVG) the chain is on the lumenal side.

In terms of assembly, interacts with FATE1. Interacts with SEC16A. Interacts with BCL2L1. Autoubiquitinated (in vitro).

It is found in the endoplasmic reticulum membrane. The protein localises to the endoplasmic reticulum. It localises to the golgi apparatus. The protein resides in the cis-Golgi network membrane. Its subcellular location is the lysosome. The enzyme catalyses S-ubiquitinyl-[E2 ubiquitin-conjugating enzyme]-L-cysteine + [acceptor protein]-L-lysine = [E2 ubiquitin-conjugating enzyme]-L-cysteine + N(6)-ubiquitinyl-[acceptor protein]-L-lysine.. It functions in the pathway protein modification; protein ubiquitination. In terms of biological role, acts as an E3 ubiquitin ligase catalyzing the covalent attachment of ubiquitin moieties onto substrate proteins. Triggers apoptosis in response to prolonged ER stress by mediating the polyubiquitination and subsequent proteasomal degradation of BCL2L1. May collaborate with FATE1 to restrain BIK protein levels thus regulating apoptotic signaling. In Bos taurus (Bovine), this protein is E3 ubiquitin-protein ligase RNF183 (RNF183).